Reading from the N-terminus, the 360-residue chain is UDP-N-acetylglucosamine--N-acetylmuramyl-(pentapeptide) pyrophosphoryl-undecaprenol N-acetylglucosamine transferase (360 aa).

Residues 11 to 13, N120, R161, S188, and Q282 contribute to the UDP-N-acetyl-alpha-D-glucosamine site; that span reads TGG.

This sequence belongs to the glycosyltransferase 28 family. MurG subfamily.

The protein resides in the cell inner membrane. It catalyses the reaction di-trans,octa-cis-undecaprenyl diphospho-N-acetyl-alpha-D-muramoyl-L-alanyl-D-glutamyl-meso-2,6-diaminopimeloyl-D-alanyl-D-alanine + UDP-N-acetyl-alpha-D-glucosamine = di-trans,octa-cis-undecaprenyl diphospho-[N-acetyl-alpha-D-glucosaminyl-(1-&gt;4)]-N-acetyl-alpha-D-muramoyl-L-alanyl-D-glutamyl-meso-2,6-diaminopimeloyl-D-alanyl-D-alanine + UDP + H(+). Its pathway is cell wall biogenesis; peptidoglycan biosynthesis. Cell wall formation. Catalyzes the transfer of a GlcNAc subunit on undecaprenyl-pyrophosphoryl-MurNAc-pentapeptide (lipid intermediate I) to form undecaprenyl-pyrophosphoryl-MurNAc-(pentapeptide)GlcNAc (lipid intermediate II). This is UDP-N-acetylglucosamine--N-acetylmuramyl-(pentapeptide) pyrophosphoryl-undecaprenol N-acetylglucosamine transferase from Synechococcus sp. (strain RCC307).